We begin with the raw amino-acid sequence, 591 residues long: MFFYSPNVAPQPSSTSHRRPTLTHQHHLHVGHLDTRLSVQIPEILSRSLVHDPERTRLVPEQLRFIIDENQELWTGSQPPTGFLELCASPVSSVFSNADARRMSQRKLVLRRPTISIQEDGKIIIDHVTARWEGANINSQSALLDADDGATVITDTIKDDQDDKEPKSCPQQTVKYIKILTPHVILVSVLIGYLCLGAWILMLLETRTELLARSKKLVRLTNLMSNFTAESWKMLNNAQHGVSNMDEGEWAATFREWMVRVSETVDDRRPIRRELNRPDDLSNMHNKWTFPTAILYVLTVLTTCGYGEVSVDTDVGKVFSVAFALVGIPLMFITAADIGKFLSETLLQFVSFWNRSVRKVKQWMSRIRHGRRKSLQSTGGPNDTLDILGVDGTEEKLWFPIGAYVSCICIYCSIGSAMFITWERTWSFIHAFHFGFNLIVTVGLGDIVVTDYIFLSLIVAFVIVGLSVVTMCVDLASTHLKAYFTRIHYFGRAKRFLGMSEELKEIVALLGAMRRKKGGKVTWNDVRDFLDNELRDRPFEPHELLMKLRFIDETSSGMSTIRHNSFQSDFFRESEYIRRVAALRPEQPAYL.

The tract at residues 1 to 24 is disordered; it reads MFFYSPNVAPQPSSTSHRRPTLTH. Residues 184–204 form a helical membrane-spanning segment; that stretch reads VILVSVLIGYLCLGAWILMLL. Residue Asn-226 is glycosylated (N-linked (GlcNAc...) asparagine). 5 consecutive transmembrane segments (helical) span residues 289–309, 318–338, 400–420, 428–448, and 453–473; these read TFPT…YGEV, VFSV…AADI, PIGA…AMFI, FIHA…GDIV, and IFLS…TMCV.

It belongs to the two pore domain potassium channel (TC 1.A.1.8) family.

The protein localises to the membrane. In terms of biological role, has a role in mobility, possibly in the transport of potassium in muscles. The sequence is that of Uncoordinated protein 58 from Caenorhabditis elegans.